Consider the following 593-residue polypeptide: Chaperone protein DnaK (593 aa).

Position 181 is a phosphothreonine; by autocatalysis (Thr181).

This sequence belongs to the heat shock protein 70 family.

Its function is as follows. Acts as a chaperone. In Mycoplasmoides gallisepticum (strain R(low / passage 15 / clone 2)) (Mycoplasma gallisepticum), this protein is Chaperone protein DnaK.